Here is a 156-residue protein sequence, read N- to C-terminus: MELRIGFGFDSHEFVEGKLLILGGVEIEKDYGLKGHSDGDALLHAITDAILGALGERDIGEIFKDTDPRWKNAPSRIFLEKALEVMSEKGFNISNIDCVIVADRPKIAPHKERIKESLSKLLGIPKERISLKGKRREGFCEGNGLVCMCTVLLVKM.

A divalent metal cation-binding residues include Asp10 and His12. Residues Asp10–His12 and His36–Ser37 contribute to the 4-CDP-2-C-methyl-D-erythritol 2-phosphate site. His44 is a binding site for a divalent metal cation. Residues Asp58 to Gly60 and Phe63 to Asp67 contribute to the 4-CDP-2-C-methyl-D-erythritol 2-phosphate site.

This sequence belongs to the IspF family. Homotrimer. A divalent metal cation is required as a cofactor.

The catalysed reaction is 4-CDP-2-C-methyl-D-erythritol 2-phosphate = 2-C-methyl-D-erythritol 2,4-cyclic diphosphate + CMP. The protein operates within isoprenoid biosynthesis; isopentenyl diphosphate biosynthesis via DXP pathway; isopentenyl diphosphate from 1-deoxy-D-xylulose 5-phosphate: step 4/6. Its function is as follows. Involved in the biosynthesis of isopentenyl diphosphate (IPP) and dimethylallyl diphosphate (DMAPP), two major building blocks of isoprenoid compounds. Catalyzes the conversion of 4-diphosphocytidyl-2-C-methyl-D-erythritol 2-phosphate (CDP-ME2P) to 2-C-methyl-D-erythritol 2,4-cyclodiphosphate (ME-CPP) with a corresponding release of cytidine 5-monophosphate (CMP). This Aquifex aeolicus (strain VF5) protein is 2-C-methyl-D-erythritol 2,4-cyclodiphosphate synthase.